Here is a 317-residue protein sequence, read N- to C-terminus: MSIAPDGRKLLRLEVRNAETPIERKPPWIKTRAKMGPEYKELKALVRREGLHTVCEEAGCPNIFECWEDREATFLIGGEQCTRRCDFCQIDTGKPADLDRDEPRRVAESVQAMGLRYSTVTGVARDDLPDGGAWLYAETVRQIKALNPNTGVELLIPDFNADPDQLRAVFESRPEVLAHNVETVPRIFKRIRPGFRYERSLAVITAARDYGLVTKSNLILGMGETPEEVRAALHDLHDAGCDIVTITQYLRPSPRHHPVERWVHPDEFVDHERYATEIGFAGVLAGPLVRSSYRAGKLYAQTVAKRSAVSLSNGEIA.

7 residues coordinate [4Fe-4S] cluster: C55, C60, C66, C81, C85, C88, and S292. The Radical SAM core domain maps to 67–281 (WEDREATFLI…ERYATEIGFA (215 aa)).

It belongs to the radical SAM superfamily. Lipoyl synthase family. Requires [4Fe-4S] cluster as cofactor.

The protein localises to the cytoplasm. It carries out the reaction [[Fe-S] cluster scaffold protein carrying a second [4Fe-4S](2+) cluster] + N(6)-octanoyl-L-lysyl-[protein] + 2 oxidized [2Fe-2S]-[ferredoxin] + 2 S-adenosyl-L-methionine + 4 H(+) = [[Fe-S] cluster scaffold protein] + N(6)-[(R)-dihydrolipoyl]-L-lysyl-[protein] + 4 Fe(3+) + 2 hydrogen sulfide + 2 5'-deoxyadenosine + 2 L-methionine + 2 reduced [2Fe-2S]-[ferredoxin]. It participates in protein modification; protein lipoylation via endogenous pathway; protein N(6)-(lipoyl)lysine from octanoyl-[acyl-carrier-protein]: step 2/2. Functionally, catalyzes the radical-mediated insertion of two sulfur atoms into the C-6 and C-8 positions of the octanoyl moiety bound to the lipoyl domains of lipoate-dependent enzymes, thereby converting the octanoylated domains into lipoylated derivatives. This is Lipoyl synthase from Mycolicibacterium gilvum (strain PYR-GCK) (Mycobacterium gilvum (strain PYR-GCK)).